We begin with the raw amino-acid sequence, 106 residues long: Replication restart protein PriB (106 aa).

The 100-residue stretch at 4-103 (TNRLVLSGTV…LHAEQIEFID (100 aa)) folds into the SSB domain.

Belongs to the PriB family. Homodimer. Interacts with PriA and DnaT. Component of the replication restart primosome. Primosome assembly occurs via a 'hand-off' mechanism. PriA binds to replication forks, subsequently PriB then DnaT bind; DnaT then displaces ssDNA to generate the helicase loading substrate.

In terms of biological role, involved in the restart of stalled replication forks, which reloads the replicative helicase on sites other than the origin of replication; the PriA-PriB pathway is the major replication restart pathway. During primosome assembly it facilitates complex formation between PriA and DnaT on DNA; stabilizes PriA on DNA. Stimulates the DNA unwinding activity of PriA helicase. The protein is Replication restart protein PriB of Yersinia pestis.